Consider the following 224-residue polypeptide: Claudin-17 (224 aa).

Residues 1 to 7 (MAFYPLQ) are Cytoplasmic-facing. The chain crosses the membrane as a helical span at residues 8-28 (IAGLVLGFFGLVGTIGTTLLP). At 29–81 (QWRVSAFIGSNIIIFERIWEGLWMNCIQQAMVTLQCKFYNSILALPPVLEAAR) the chain is on the extracellular side. The helical transmembrane segment at 82–102 (ALMCVAVALALVALIIGICGM) threads the bilayer. The Cytoplasmic portion of the chain corresponds to 103–124 (KQLQCTGSSERVKAYLLGTSGV). A helical membrane pass occupies residues 125 to 145 (LFILTGIFVLIPVSWTANIII). The Extracellular portion of the chain corresponds to 146–164 (RDFYDPTVHAGQKRELGGA). The helical transmembrane segment at 165-185 (LFLGWATAAVLFIGGGLLCGY) threads the bilayer. At 186–224 (CCCNRKERWHRYPVPAYRVPQKDNQRNVTVPRKSSTSYV) the chain is on the cytoplasmic side.

This sequence belongs to the claudin family. In terms of assembly, does not form homotypic polymeric strands and it is not sufficient to form tight junctions by its own. Interacts with OCLN. In terms of tissue distribution, expressed at high levels in the kidney and at mucher lower levels in the brain. In the kidney, expression gradually decreases from the proximal tubule downstream to the distal convoluted tubule. Expressed in the thin ascending limb of Henle's loop, as well as in the thick ascending limb of Henle's loop. In the distal convoluted tubules, expressed only in a few tubules. Not detected in the collecting duct. In the brain, expressed in blood vessels (at protein level).

Its subcellular location is the cell junction. The protein resides in the tight junction. The protein localises to the cell membrane. The enzyme catalyses chloride(in) = chloride(out). The catalysed reaction is hydrogencarbonate(in) = hydrogencarbonate(out). It carries out the reaction bromide(in) = bromide(out). It catalyses the reaction iodide(out) = iodide(in). The enzyme catalyses fluoride(in) = fluoride(out). The catalysed reaction is nitrate(in) = nitrate(out). It carries out the reaction thiocyanate(in) = thiocyanate(out). In terms of biological role, channel-forming tight junction protein with selectivity for anions, including chloride and hydrogencarbonate, and for solutes smaller than 9 Angstrom in diameter. In the kidney proximal tubule, may be involved in quantitative reabsorption of filtered anions. Does not affect water permeability. In Mus musculus (Mouse), this protein is Claudin-17 (Cldn17).